The chain runs to 332 residues: Adenosine deaminase (332 aa).

Zn(2+) contacts are provided by His-12 and His-14. Substrate-binding residues include His-14, Asp-16, and Gly-170. Residue His-197 participates in Zn(2+) binding. Glu-200 functions as the Proton donor in the catalytic mechanism. Residue Asp-278 participates in Zn(2+) binding.

It belongs to the metallo-dependent hydrolases superfamily. Adenosine and AMP deaminases family. Adenosine deaminase subfamily. The cofactor is Zn(2+).

The catalysed reaction is adenosine + H2O + H(+) = inosine + NH4(+). It catalyses the reaction 2'-deoxyadenosine + H2O + H(+) = 2'-deoxyinosine + NH4(+). Its function is as follows. Catalyzes the hydrolytic deamination of adenosine and 2-deoxyadenosine. This is Adenosine deaminase from Clostridium perfringens (strain ATCC 13124 / DSM 756 / JCM 1290 / NCIMB 6125 / NCTC 8237 / Type A).